A 1790-amino-acid chain; its full sequence is Protein FAM186A (1790 aa).

The protein belongs to the FAM186 family.

This chain is Protein FAM186A (FAM186A), found in Mus musculus (Mouse).